The sequence spans 812 residues: Lon protease (812 aa).

The 194-residue stretch at 22–215 (YAVLPLRDIV…KALSFMEAEI (194 aa)) folds into the Lon N-terminal domain. 367–374 (GPPGVGKT) contributes to the ATP binding site. The Lon proteolytic domain occupies 602–783 (EDQVGVVTGL…GEVLKHALVR (182 aa)). Catalysis depends on residues serine 689 and lysine 732. Positions 787-812 (PIEWTEQENPTAVPPVEDEAGASLAH) are disordered.

The protein belongs to the peptidase S16 family. As to quaternary structure, homohexamer. Organized in a ring with a central cavity.

It is found in the cytoplasm. The catalysed reaction is Hydrolysis of proteins in presence of ATP.. Functionally, ATP-dependent serine protease that mediates the selective degradation of mutant and abnormal proteins as well as certain short-lived regulatory proteins. Required for cellular homeostasis and for survival from DNA damage and developmental changes induced by stress. Degrades polypeptides processively to yield small peptide fragments that are 5 to 10 amino acids long. Binds to DNA in a double-stranded, site-specific manner. In Brucella melitensis biotype 1 (strain ATCC 23456 / CCUG 17765 / NCTC 10094 / 16M), this protein is Lon protease.